Reading from the N-terminus, the 235-residue chain is Pathogen-related protein (235 aa).

The chain is Pathogen-related protein from Hordeum vulgare (Barley).